The primary structure comprises 314 residues: Large ribosomal subunit protein uL10 (314 aa).

Residues 281-314 (GSTQETPEEKKEEAKKEEKSPDESISEGLGALFQ) form a disordered region. Positions 287-302 (PEEKKEEAKKEEKSPD) are enriched in basic and acidic residues.

The protein belongs to the universal ribosomal protein uL10 family. Part of the 50S ribosomal subunit. Forms part of the ribosomal stalk which helps the ribosome interact with GTP-bound translation factors. Forms a heptameric L10(L12)2(L12)2(L12)2 complex, where L10 forms an elongated spine to which the L12 dimers bind in a sequential fashion.

Its function is as follows. Forms part of the ribosomal stalk, playing a central role in the interaction of the ribosome with GTP-bound translation factors. The chain is Large ribosomal subunit protein uL10 from Thermoplasma acidophilum (strain ATCC 25905 / DSM 1728 / JCM 9062 / NBRC 15155 / AMRC-C165).